Here is an 851-residue protein sequence, read N- to C-terminus: Probable alpha,alpha-trehalose-phosphate synthase [UDP-forming] 7 (851 aa).

Serine 5 is subject to Phosphoserine. Threonine 32 is modified (phosphothreonine). The segment at 59 to 540 (DRMIIVANRL…SRSFLQDLER (482 aa)) is glycosyltransferase.

It in the N-terminal section; belongs to the glycosyltransferase 20 family. This sequence in the C-terminal section; belongs to the trehalose phosphatase family. As to quaternary structure, binds to the phosphopeptide-binding site of GRF/14-3-3. In terms of processing, phosphorylated. As to expression, expressed in seedlings, leaves, roots, stems, flowers and siliques.

The catalysed reaction is D-glucose 6-phosphate + UDP-alpha-D-glucose = alpha,alpha-trehalose 6-phosphate + UDP + H(+). This chain is Probable alpha,alpha-trehalose-phosphate synthase [UDP-forming] 7 (TPS7), found in Arabidopsis thaliana (Mouse-ear cress).